The sequence spans 235 residues: Caffeoyl-CoA O-methyltransferase (235 aa).

Lys-8 contacts substrate. S-adenosyl-L-methionine is bound by residues Val-52, Glu-74, 76–77, Ser-82, Asp-100, and Ala-129; that span reads GV. Asp-151 contacts substrate. Asp-151 lines the a divalent metal cation pocket. Asp-153 contributes to the S-adenosyl-L-methionine binding site. The a divalent metal cation site is built by Asp-177 and Asn-178.

The protein belongs to the class I-like SAM-binding methyltransferase superfamily. Cation-dependent O-methyltransferase family. CCoAMT subfamily. Requires a divalent metal cation as cofactor.

It carries out the reaction (E)-caffeoyl-CoA + S-adenosyl-L-methionine = (E)-feruloyl-CoA + S-adenosyl-L-homocysteine + H(+). It functions in the pathway aromatic compound metabolism; phenylpropanoid biosynthesis. In terms of biological role, methylates caffeoyl-CoA to feruloyl-CoA and 5-hydroxyferuloyl-CoA to sinapoyl-CoA. Plays a role in the synthesis of feruloylated polysaccharides. Involved in the reinforcement of the plant cell wall. Also involved in the responding to wounding or pathogen challenge by the increased formation of cell wall-bound ferulic acid polymers. The polypeptide is Caffeoyl-CoA O-methyltransferase (Populus kitakamiensis (Aspen)).